The primary structure comprises 393 residues: tRNA(Met) cytidine acetate ligase (393 aa).

Residues Gly81, Asn142, and Arg167 each contribute to the ATP site.

Belongs to the TmcAL family.

It is found in the cytoplasm. The enzyme catalyses cytidine(34) in elongator tRNA(Met) + acetate + ATP = N(4)-acetylcytidine(34) in elongator tRNA(Met) + AMP + diphosphate. In terms of biological role, catalyzes the formation of N(4)-acetylcytidine (ac(4)C) at the wobble position of elongator tRNA(Met), using acetate and ATP as substrates. First activates an acetate ion to form acetyladenylate (Ac-AMP) and then transfers the acetyl group to tRNA to form ac(4)C34. The sequence is that of tRNA(Met) cytidine acetate ligase from Bacillus thuringiensis (strain Al Hakam).